Reading from the N-terminus, the 103-residue chain is Large ribosomal subunit protein bL21 (103 aa).

The protein belongs to the bacterial ribosomal protein bL21 family. Part of the 50S ribosomal subunit. Contacts protein L20.

Its function is as follows. This protein binds to 23S rRNA in the presence of protein L20. The sequence is that of Large ribosomal subunit protein bL21 from Rhodococcus jostii (strain RHA1).